Consider the following 389-residue polypeptide: MFTLFLLIALSSAKVYFHETFENRDKWIDSTSSGKALGPFKIVSGKWYGDANNKGLQTSEDNKFYIAAAKLDEEFSNKDKNLIVQYNLKFEQGIDCGGGYIKLLPKKSIESEEKFTPESEYNIMFGPDVCGGSKRTHVIMNYKGKNNLIRKEIKCESDDISHLYTLIIRPNNTYVVKIDGVEKQEGKFDEDWDMLAPKEIDDPNVSKPADWVDEKEIDDPNDKKPEGWDDIPKTIVDPNAKKPEEWNDEDDGEWEAPTIENPEYKGEWKPKRIPNPAYKGEWVHPQIANPDYVYDPELYKYDSFAYIGIDVWQVKAGTIYDDILITDDIEEAEKEAKVILERNAAEKKMRDEIKEAEKQKEEEAKKEAEKQKEEETKEEIKKEENKEEL.

The N-terminal stretch at 1–13 (MFTLFLLIALSSA) is a signal peptide. The tract at residues 12–189 (SAKVYFHETF…GVEKQEGKFD (178 aa)) is N-domain. Ca(2+) contacts are provided by Thr20, Asn52, and Asn53. Cys96 and Cys130 are oxidised to a cystine. Positions 100, 102, 121, and 128 each coordinate an alpha-D-glucoside. Repeat copies occupy residues 183-194 (KQEGKFDEDWDM), 202-213 (DPNVSKPADWVD), 219-230 (DPNDKKPEGWDD), 237-248 (DPNAKKPEEWND), 252-262 (GEWEAPTIENP), 266-276 (GEWKPKRIPNP), and 280-290 (GEWVHPQIANP). A 4 X approximate repeats region spans residues 183–248 (KQEGKFDEDW…NAKKPEEWND (66 aa)). A P-domain region spans residues 190-301 (EDWDMLAPKE…YVYDPELYKY (112 aa)). The span at 213–232 (DEKEIDDPNDKKPEGWDDIP) shows a compositional bias: basic and acidic residues. The interval 213 to 256 (DEKEIDDPNDKKPEGWDDIPKTIVDPNAKKPEEWNDEDDGEWEA) is disordered. Positions 252–290 (GEWEAPTIENPEYKGEWKPKRIPNPAYKGEWVHPQIANP) are 3 X approximate repeats. The interval 302–389 (DSFAYIGIDV…IKKEENKEEL (88 aa)) is C-domain. Asp310 provides a ligand contact to an alpha-D-glucoside. Asp321 contributes to the Ca(2+) binding site. A coiled-coil region spans residues 329-388 (IEEAEKEAKVILERNAAEKKMRDEIKEAEKQKEEEAKKEAEKQKEEETKEEIKKEENKEE). Residues 347–389 (KKMRDEIKEAEKQKEEEAKKEAEKQKEEETKEEIKKEENKEEL) form a disordered region. Residues 386–389 (KEEL) carry the Prevents secretion from ER motif.

The protein belongs to the calreticulin family. Interacts (via C-terminus) with host C1q.

It is found in the endoplasmic reticulum lumen. It localises to the cell projection. Its subcellular location is the uropodium. The protein resides in the cell surface. The protein localises to the phagocytic cup. Molecular calcium-binding chaperone promoting folding, oligomeric assembly and quality control in the ER via the calreticulin/calnexin cycle. This lectin may interact transiently with almost all of the monoglucosylated glycoproteins that are synthesized in the ER. Plays a role in host cell phagocytosis, possibly by acting as a receptor for host C1q. Binding to C1q prevents the activation of the host classical complement pathway. Also, binds to apoptotic host cells independently of host C1q and collectins. This chain is Calreticulin, found in Entamoeba histolytica (strain ATCC 30459 / HM-1:IMSS / ABRM).